Reading from the N-terminus, the 510-residue chain is DAP3-binding cell death enhancer 1 (510 aa).

The N-terminal 23 residues, 1–23 (MWRLTGILGRALPRLLGPGFRGI), are a transit peptide targeting the mitochondrion. 2 disordered regions span residues 19–61 (GFRG…SRDP) and 142–185 (VLPR…SGLL). Positions 24 to 101 (TPKPTSSDGS…AVLALHLARQ (78 aa)) are cleaved as a propeptide — extended MTS. Positions 35 to 45 (TTSPTLPLTRL) are enriched in low complexity. Composition is skewed to basic and acidic residues over residues 46–61 (SFDRSGSHGSKRSRDP) and 155–167 (GLREPRQGQEDHP). Polar residues predominate over residues 169 to 181 (APSQCLPSDSSLR). 7 TPR repeats span residues 213-245 (AHPPGGKNEQDKAKALPLEEAVTSIQQLFQLSV), 246-278 (AITFNFLGTENIKTGDYTAAFSYFQKAADRGYS), 279-313 (KAQYNVGLCLEHGRGTPRDLSKAILFYHLAAVQGH), 314-351 (SLAQYRYARCLLQSPGSLSDPERERAVSLLKQAADSGL), 352-385 (TEAQAFLGVLFTKEPHLDEQRAVKYLWLAASNGD), 386-423 (SQSRFHLGICYEKGLGAQRNLGEAVKCYQQAAAMGNEP), and 471-499 (ASSTGNLGLLCRSGHLGASHGAPSRTIPS). An SIFI-degron motif is present at residues 307-326 (LAAVQGHSLAQYRYARCLLQ).

The protein belongs to the DELE1 family. Interacts with DAP3. In terms of assembly, interacts (via TPR repeats) with EIF2AK1/HRI; activating the protein kinase activity of EIF2AK1/HRI, thereby promoting the integrated stress response (ISR). As to quaternary structure, homooctamer; oligomerization is required to activate EIF2AK1/HRI. Interacts (via TPR repeats) with EIF2AK1/HRI; activating the protein kinase activity of EIF2AK1/HRI, thereby promoting the integrated stress response (ISR). Unstable protein in absence of stress: imported in the mitochondrial matrix following processing by the mitochondrial-processing peptidase (MPP), where it is degraded by LONP1. Stabilized in response to iron deficiency: iron deficiency impairs mitochondrial import, promoting localization at the mitochondrial surface and stabilization. Cleaved by OMA1 in response to mitochondrial stress, generating the DAP3-binding cell death enhancer 1 short form (DELE1(S) or S-DELE1) that accumulates in the cytosol and activates the protein kinase activity of EIF2AK1/HRI. Protein cleavage by OMA1 can take place at different positions, and apparently does not require a specific sequence motif. Post-translationally, ubiquitinated and degraded by the SIFI complex once the mitochondrial stress has been resolved, thereby providing stress response silencing. Within the SIFI complex, UBR4 initiates ubiquitin chain that are further elongated or branched by KCMF1.

The protein localises to the mitochondrion. It is found in the mitochondrion outer membrane. It localises to the mitochondrion inner membrane. The protein resides in the cytoplasm. Its subcellular location is the cytosol. In terms of biological role, protein kinase activator that acts as a key activator of the integrated stress response (ISR) following various stresses, such as iron deficiency, mitochondrial stress or mitochondrial DNA breaks. Detects impaired protein import and processing in mitochondria, activating the ISR. May also required for the induction of death receptor-mediated apoptosis through the regulation of caspase activation. Functionally, protein kinase activator that activates the ISR in response to iron deficiency: iron deficiency impairs mitochondrial import, promoting DELE1 localization at the mitochondrial surface, where it binds and activates EIF2AK1/HRI to trigger the ISR. Its function is as follows. Protein kinase activator generated by protein cleavage in response to mitochondrial stress, which accumulates in the cytosol and specifically binds to and activates the protein kinase activity of EIF2AK1/HRI. It thereby activates the integrated stress response (ISR): EIF2AK1/HRI activation promotes eIF-2-alpha (EIF2S1) phosphorylation, leading to a decrease in global protein synthesis and the induction of selected genes, including the transcription factor ATF4, the master transcriptional regulator of the ISR. Also acts as an activator of PRKN-independent mitophagy: activates the protein kinase activity of EIF2AK1/HRI in response to mitochondrial damage, promoting eIF-2-alpha (EIF2S1) phosphorylation, leading to mitochondrial localization of EIF2S1 followed by induction of mitophagy. The protein is DAP3-binding cell death enhancer 1 of Mus musculus (Mouse).